The chain runs to 440 residues: Xylose isomerase (440 aa).

Active-site residues include H101 and D104. Positions 232, 268, 271, 296, 307, 309, and 339 each coordinate Mg(2+).

It belongs to the xylose isomerase family. As to quaternary structure, homotetramer. Mg(2+) serves as cofactor.

It is found in the cytoplasm. It catalyses the reaction alpha-D-xylose = alpha-D-xylulofuranose. This Enterobacter sp. (strain 638) protein is Xylose isomerase.